Here is a 743-residue protein sequence, read N- to C-terminus: Beta-galactosidase (743 aa).

Residue glutamate 388 is the Proton donor of the active site. The Nucleophile role is filled by glutamate 453.

Belongs to the glycosyl hydrolase 2 family. Homodimer.

The catalysed reaction is Hydrolysis of terminal non-reducing beta-D-galactose residues in beta-D-galactosides.. Functionally, beta-galactosidase. This is Beta-galactosidase (lacZ) from Thermoanaerobacter pseudethanolicus (strain ATCC 33223 / 39E) (Clostridium thermohydrosulfuricum).